The chain runs to 304 residues: MSPYPRPRWLVTGASGMLGRELTPLLDRRGAAVTALGRGHLDITDGAAVRSAVAEHRPAVVVNCAAWTAVDEAESEPALAMAVNGEGPRHLAQACRAVGAVLLQLSTDYVFPGSGGRPYREDHPTGPRTVYGCTKRAGERAVLEVLPDTGYIVRTAWLYGAGGPNFVAKMIRLEADEDTVLVVDDQHGQPTWTADLADRLAALGAAALAGTAPAGIYHATNTGGTTWNALAPETFRLLGADPARVRPTTSLALARPAVRPRYSVLDQSRWKAAGLEPLRHWRAALTESFPALCGRAGRPVPGPR.

Residues glycine 16–leucine 18, aspartate 42–isoleucine 43, and alanine 66–threonine 68 each bind NADH. NADPH contacts are provided by residues methionine 17–leucine 18, aspartate 42–isoleucine 43, and alanine 66–threonine 68. Position 107–108 (threonine 107–aspartate 108) interacts with dTDP-beta-L-rhamnose. Residues tyrosine 131 and lysine 135 each coordinate NADH. 2 residues coordinate NADPH: tyrosine 131 and lysine 135. The Proton donor/acceptor role is filled by tyrosine 131. Tryptophan 157 is a dTDP-beta-L-rhamnose binding site.

It belongs to the dTDP-4-dehydrorhamnose reductase family. In terms of assembly, homodimer. Requires Mg(2+) as cofactor.

The catalysed reaction is dTDP-beta-L-rhamnose + NADP(+) = dTDP-4-dehydro-beta-L-rhamnose + NADPH + H(+). The protein operates within carbohydrate biosynthesis; dTDP-L-rhamnose biosynthesis. Its pathway is antibiotic biosynthesis; streptomycin biosynthesis. In terms of biological role, involved in the biosynthesis of the streptose moiety of streptomycin. Catalyzes the reduction of dTDP-6-deoxy-L-lyxo-4-hexulose to yield dTDP-L-rhamnose. RmlD uses NADH and NADPH nearly equally well. This Streptomyces griseus protein is dTDP-4-dehydrorhamnose reductase.